Reading from the N-terminus, the 141-residue chain is Hemoglobin subunit alpha-1/2 (141 aa).

Residues 1-141 (VLSPADKTNV…VSTVLTSKYR (141 aa)) enclose the Globin domain. Ser3 carries the post-translational modification Phosphoserine. Lys7 carries the post-translational modification N6-succinyllysine. Residue Thr8 is modified to Phosphothreonine. Lys11 bears the N6-succinyllysine mark. Lys16 carries the post-translational modification N6-acetyllysine; alternate. Lys16 bears the N6-succinyllysine; alternate mark. Tyr24 carries the phosphotyrosine modification. Phosphoserine is present on Ser35. Lys40 carries the N6-succinyllysine modification. At Ser49 the chain carries Phosphoserine. O2 is bound at residue His58. A heme b-binding site is contributed by His87. The residue at position 102 (Ser102) is a Phosphoserine. Residue Thr108 is modified to Phosphothreonine. A phosphoserine mark is found at Ser124 and Ser131. Phosphothreonine is present on residues Thr134 and Thr137. Position 138 is a phosphoserine (Ser138).

It belongs to the globin family. Heterotetramer of two alpha chains and two beta chains. Red blood cells.

In terms of biological role, involved in oxygen transport from the lung to the various peripheral tissues. The protein is Hemoglobin subunit alpha-1/2 of Macaca speciosa (Stump-tail macaque).